Consider the following 116-residue polypeptide: Putative iron-sulfur cluster insertion protein ErpA (116 aa).

3 residues coordinate iron-sulfur cluster: Cys-44, Cys-108, and Cys-110.

It belongs to the HesB/IscA family. Homodimer. The cofactor is iron-sulfur cluster.

Functionally, required for insertion of 4Fe-4S clusters. This Dechloromonas aromatica (strain RCB) protein is Putative iron-sulfur cluster insertion protein ErpA.